The following is a 296-amino-acid chain: Lipoyl synthase (296 aa).

[4Fe-4S] cluster-binding residues include Cys-37, Cys-42, Cys-48, Cys-63, Cys-67, Cys-70, and Ser-276. In terms of domain architecture, Radical SAM core spans 49 to 265; it reads WSKKHTTVMI…ERVAKTKGFL (217 aa).

The protein belongs to the radical SAM superfamily. Lipoyl synthase family. The cofactor is [4Fe-4S] cluster.

It localises to the cytoplasm. It carries out the reaction [[Fe-S] cluster scaffold protein carrying a second [4Fe-4S](2+) cluster] + N(6)-octanoyl-L-lysyl-[protein] + 2 oxidized [2Fe-2S]-[ferredoxin] + 2 S-adenosyl-L-methionine + 4 H(+) = [[Fe-S] cluster scaffold protein] + N(6)-[(R)-dihydrolipoyl]-L-lysyl-[protein] + 4 Fe(3+) + 2 hydrogen sulfide + 2 5'-deoxyadenosine + 2 L-methionine + 2 reduced [2Fe-2S]-[ferredoxin]. Its pathway is protein modification; protein lipoylation via endogenous pathway; protein N(6)-(lipoyl)lysine from octanoyl-[acyl-carrier-protein]: step 2/2. Functionally, catalyzes the radical-mediated insertion of two sulfur atoms into the C-6 and C-8 positions of the octanoyl moiety bound to the lipoyl domains of lipoate-dependent enzymes, thereby converting the octanoylated domains into lipoylated derivatives. This Rickettsia peacockii (strain Rustic) protein is Lipoyl synthase.